Reading from the N-terminus, the 274-residue chain is NAD kinase (274 aa).

The active-site Proton acceptor is the Asp59. NAD(+)-binding positions include 59 to 60, Lys64, 128 to 129, Asp158, 169 to 174, and Ala193; these read DG, ND, and TAYALS.

It belongs to the NAD kinase family. A divalent metal cation serves as cofactor.

It is found in the cytoplasm. The enzyme catalyses NAD(+) + ATP = ADP + NADP(+) + H(+). Involved in the regulation of the intracellular balance of NAD and NADP, and is a key enzyme in the biosynthesis of NADP. Catalyzes specifically the phosphorylation on 2'-hydroxyl of the adenosine moiety of NAD to yield NADP. This Petrotoga mobilis (strain DSM 10674 / SJ95) protein is NAD kinase.